The sequence spans 314 residues: Malate dehydrogenase (314 aa).

Residues 7–13 and D34 contribute to the NAD(+) site; that span reads GAAGGIG. 2 residues coordinate substrate: R81 and R87. Residues N94 and 117 to 119 contribute to the NAD(+) site; that span reads ITN. Substrate is bound by residues N119 and R153. Residue H177 is the Proton acceptor of the active site. M230 provides a ligand contact to NAD(+).

This sequence belongs to the LDH/MDH superfamily. MDH type 1 family. In terms of assembly, homodimer.

The enzyme catalyses (S)-malate + NAD(+) = oxaloacetate + NADH + H(+). Catalyzes the reversible oxidation of malate to oxaloacetate. The sequence is that of Malate dehydrogenase from Glaesserella parasuis serovar 5 (strain SH0165) (Haemophilus parasuis).